The primary structure comprises 723 residues: Fatty acid oxidation complex subunit alpha (723 aa).

The segment at 1–189 (MIYQAETLQV…KIGLLDAVVD (189 aa)) is enoyl-CoA hydratase/isomerase. Aspartate 296 is a substrate binding site. Residues 311–723 (NKETQRAAVL…FYGAQQQGSI (413 aa)) are 3-hydroxyacyl-CoA dehydrogenase. NAD(+)-binding positions include methionine 325, aspartate 344, 401–403 (VVE), lysine 408, and serine 430. Histidine 451 functions as the For 3-hydroxyacyl-CoA dehydrogenase activity in the catalytic mechanism. Position 454 (asparagine 454) interacts with NAD(+). Residues asparagine 501 and tyrosine 661 each contribute to the substrate site.

This sequence in the N-terminal section; belongs to the enoyl-CoA hydratase/isomerase family. In the C-terminal section; belongs to the 3-hydroxyacyl-CoA dehydrogenase family. In terms of assembly, heterotetramer of two alpha chains (FadB) and two beta chains (FadA).

It carries out the reaction a (3S)-3-hydroxyacyl-CoA + NAD(+) = a 3-oxoacyl-CoA + NADH + H(+). The enzyme catalyses a (3S)-3-hydroxyacyl-CoA = a (2E)-enoyl-CoA + H2O. It catalyses the reaction a 4-saturated-(3S)-3-hydroxyacyl-CoA = a (3E)-enoyl-CoA + H2O. The catalysed reaction is (3S)-3-hydroxybutanoyl-CoA = (3R)-3-hydroxybutanoyl-CoA. It carries out the reaction a (3Z)-enoyl-CoA = a 4-saturated (2E)-enoyl-CoA. The enzyme catalyses a (3E)-enoyl-CoA = a 4-saturated (2E)-enoyl-CoA. Its pathway is lipid metabolism; fatty acid beta-oxidation. Its function is as follows. Involved in the aerobic and anaerobic degradation of long-chain fatty acids via beta-oxidation cycle. Catalyzes the formation of 3-oxoacyl-CoA from enoyl-CoA via L-3-hydroxyacyl-CoA. It can also use D-3-hydroxyacyl-CoA and cis-3-enoyl-CoA as substrate. This is Fatty acid oxidation complex subunit alpha from Vibrio vulnificus (strain CMCP6).